The chain runs to 316 residues: Ribosomal RNA small subunit methyltransferase H (316 aa).

Residues 35-37 (GGH), aspartate 55, phenylalanine 80, aspartate 102, and glutamine 109 each bind S-adenosyl-L-methionine.

Belongs to the methyltransferase superfamily. RsmH family.

The protein localises to the cytoplasm. It carries out the reaction cytidine(1402) in 16S rRNA + S-adenosyl-L-methionine = N(4)-methylcytidine(1402) in 16S rRNA + S-adenosyl-L-homocysteine + H(+). Specifically methylates the N4 position of cytidine in position 1402 (C1402) of 16S rRNA. This Colwellia psychrerythraea (strain 34H / ATCC BAA-681) (Vibrio psychroerythus) protein is Ribosomal RNA small subunit methyltransferase H.